Reading from the N-terminus, the 176-residue chain is Peptide deformylase 1 (176 aa).

Fe cation-binding residues include C99 and H141. E142 is an active-site residue. Residue H145 participates in Fe cation binding.

The protein belongs to the polypeptide deformylase family. The cofactor is Fe(2+).

It catalyses the reaction N-terminal N-formyl-L-methionyl-[peptide] + H2O = N-terminal L-methionyl-[peptide] + formate. Functionally, removes the formyl group from the N-terminal Met of newly synthesized proteins. Requires at least a dipeptide for an efficient rate of reaction. N-terminal L-methionine is a prerequisite for activity but the enzyme has broad specificity at other positions. The chain is Peptide deformylase 1 from Nitrosomonas europaea (strain ATCC 19718 / CIP 103999 / KCTC 2705 / NBRC 14298).